We begin with the raw amino-acid sequence, 260 residues long: Reaction center protein H chain (260 aa).

The Periplasmic portion of the chain corresponds to 1 to 11 (MVGVTAFGNFD). A helical transmembrane segment spans residues 12–31 (LASLAIYSFWIFLAGLIYYL). The Cytoplasmic segment spans residues 32–260 (QTENMREGYP…VVAAMLAEYA (229 aa)).

The protein belongs to the reaction center PuhA family. As to quaternary structure, heterotrimer composed of subunits L, M, and H. It depends on a bacteriochlorophyll as a cofactor. A bacteriopheophytin is required as a cofactor. Fe cation serves as cofactor. Requires Mg(2+) as cofactor. The cofactor is a ubiquinone.

It localises to the cellular chromatophore membrane. In terms of biological role, the reaction center is a membrane-bound complex that mediates the initial photochemical event in the electron transfer process of photosynthesis. This chain is Reaction center protein H chain (puhA), found in Cereibacter sphaeroides (strain ATCC 17023 / DSM 158 / JCM 6121 / CCUG 31486 / LMG 2827 / NBRC 12203 / NCIMB 8253 / ATH 2.4.1.) (Rhodobacter sphaeroides).